The sequence spans 710 residues: Conserved oligomeric Golgi complex subunit 2 (710 aa).

Belongs to the COG2 family. As to quaternary structure, component of the conserved oligomeric Golgi complex which is composed of eight different subunits and is required for normal Golgi morphology and localization.

The protein resides in the golgi apparatus membrane. Functionally, required for normal Golgi morphology and function. The sequence is that of Conserved oligomeric Golgi complex subunit 2 from Drosophila melanogaster (Fruit fly).